A 303-amino-acid chain; its full sequence is MSETPRLLFVHAHPDDESLSNGATIAHYTSRGAQVHVVTCTLGEEGEVIGDRWAQLTADHADQLGGYRIGELTAALRALGVSAPIYLGGAGRWRDSGMAGTDQRSQRRFVDADPRQTVGALVAIIRELRPHVVVTYDPNGGYGHPDHVHTHTVTTAAVAAAGVGSGTADHPGDPWTVPKFYWTVLGLSALISGARALVPDDLRPEWVLPRADEIAFGYSDDGIDAVVEADEQARAAKVAALAAHATQVVVGPTGRAAALSNNLALPILADEHYVLAGGSAGARDERGWETDLLAGLGFTASGT.

Residues His13, Asp16, and His147 each coordinate Zn(2+).

It belongs to the MshB deacetylase family. The cofactor is Zn(2+).

It catalyses the reaction 1D-myo-inositol 2-acetamido-2-deoxy-alpha-D-glucopyranoside + H2O = 1D-myo-inositol 2-amino-2-deoxy-alpha-D-glucopyranoside + acetate. In terms of biological role, catalyzes the deacetylation of 1D-myo-inositol 2-acetamido-2-deoxy-alpha-D-glucopyranoside (GlcNAc-Ins) in the mycothiol biosynthesis pathway. This chain is 1D-myo-inositol 2-acetamido-2-deoxy-alpha-D-glucopyranoside deacetylase, found in Mycobacterium tuberculosis (strain ATCC 25177 / H37Ra).